Reading from the N-terminus, the 144-residue chain is 3-hydroxyacyl-[acyl-carrier-protein] dehydratase FabZ (144 aa).

His51 is an active-site residue.

This sequence belongs to the thioester dehydratase family. FabZ subfamily.

It localises to the cytoplasm. It carries out the reaction a (3R)-hydroxyacyl-[ACP] = a (2E)-enoyl-[ACP] + H2O. In terms of biological role, involved in unsaturated fatty acids biosynthesis. Catalyzes the dehydration of short chain beta-hydroxyacyl-ACPs and long chain saturated and unsaturated beta-hydroxyacyl-ACPs. The protein is 3-hydroxyacyl-[acyl-carrier-protein] dehydratase FabZ (fabZ1) of Enterococcus faecalis (strain ATCC 700802 / V583).